The sequence spans 373 residues: Probable cysteine protease RD19C (373 aa).

The first 20 residues, 1–20 (MDRVVFFFLIAATLLAGSLG), serve as a signal peptide directing secretion. Residues 21–139 (STVISGEVTD…QTAPILPTSD (119 aa)) constitute a propeptide, activation peptide. 2 disulfides stabilise this stretch: Cys161-Cys211 and Cys195-Cys245. Cys164 is an active-site residue. Asn258 carries an N-linked (GlcNAc...) asparagine glycan. A disulfide bond links Cys301 and Cys356. Residues His307 and Asn334 contribute to the active site.

Belongs to the peptidase C1 family.

Its subcellular location is the lytic vacuole. Its function is as follows. Probable thiol protease. This Arabidopsis thaliana (Mouse-ear cress) protein is Probable cysteine protease RD19C.